Reading from the N-terminus, the 661-residue chain is Serine/threonine-protein phosphatase rdgC (661 aa).

An IQ domain is found at 7 to 32 (RAAIFIQKWYRRHQARREMQRRCNWQ). A catalytic region spans residues 105 to 413 (IDLLIDVFRK…HFVQYISAAS (309 aa)). Mn(2+) is bound by residues Asp-158, His-160, Asp-187, and Asn-219. The Proton donor role is filled by His-220. His-271 and His-360 together coordinate Mn(2+). 3 EF-hand domains span residues 441-476 (DHRDELEDEFRKYDPKDSGYISISHWCKVMENVTKL), 526-561 (ANKASLVAIFNIIDADNSGEITLDEFETAIDLLVAH), and 566-601 (YSKAEMLEKCRMMDLNGDGKVDLNEFLEAFRLSDLH). Ca(2+) contacts are provided by Asp-539, Asp-541, Ser-543, Glu-545, Glu-550, Asp-579, Asn-581, Asp-583, Lys-585, and Glu-590. Residues 606–625 (QDENIRRRSTGRPSVAKTAT) form a disordered region.

It belongs to the PPP phosphatase family. Mn(2+) serves as cofactor. In terms of tissue distribution, expressed in the visual system of the fly, as well as in the mushroom bodies of the central brain.

The enzyme catalyses O-phospho-L-seryl-[protein] + H2O = L-seryl-[protein] + phosphate. The catalysed reaction is O-phospho-L-threonyl-[protein] + H2O = L-threonyl-[protein] + phosphate. In terms of biological role, phosphatase required to prevent light-induced retinal degeneration. The protein is Serine/threonine-protein phosphatase rdgC (rdgC) of Drosophila melanogaster (Fruit fly).